A 953-amino-acid polypeptide reads, in one-letter code: GATA zinc finger domain-containing protein 14 (953 aa).

Polar residues predominate over residues 1 to 21 (MFEKIPNQNSHSMGDNNTGYY). Disordered regions lie at residues 1 to 109 (MFEK…SPNR) and 216 to 756 (TYGS…TQPQ). The span at 22-89 (NNNNNNNNNN…QLPSPQLSQP (68 aa)) shows a compositional bias: low complexity. Positions 90 to 109 (NSMNTTPNQTSPNLRSSPNR) are enriched in polar residues. Low complexity-rich tracts occupy residues 219-330 (SSNT…VNAN), 342-683 (NIYN…PNSS), and 690-756 (GNNG…TQPQ). The GATA-type zinc-finger motif lies at 893-918 (CTSCGTTQTPEWRKGPAGGKSLCNAC). The tract at residues 934-953 (KVETTSSPPSTSMNVVNLLN) is disordered.

The protein is GATA zinc finger domain-containing protein 14 (gtaN) of Dictyostelium discoideum (Social amoeba).